The primary structure comprises 651 residues: UvrABC system protein B (651 aa).

The region spanning 25 to 411 is the Helicase ATP-binding domain; the sequence is RGISCGAKEQ…TGGVATEQLI (387 aa). ATP is bound at residue 38–45; sequence GVTGSGKT. The Beta-hairpin signature appears at 91-114; the sequence is YYDYYQPEAYIPQSDVYIEKDALI. The 165-residue stretch at 427-591 folds into the Helicase C-terminal domain; sequence DGQIHDVMCE…IVPRTIQKPV (165 aa). The interval 593 to 615 is disordered; it reads TSLSERVGSSRKKVSRDTNTDPA. In terms of domain architecture, UVR spans 616–651; it reads NRDIVELQKEMLLCAENLDFERAVEIRNEIKRLTAP.

The protein belongs to the UvrB family. In terms of assembly, forms a heterotetramer with UvrA during the search for lesions. Interacts with UvrC in an incision complex.

It is found in the cytoplasm. Functionally, the UvrABC repair system catalyzes the recognition and processing of DNA lesions. A damage recognition complex composed of 2 UvrA and 2 UvrB subunits scans DNA for abnormalities. Upon binding of the UvrA(2)B(2) complex to a putative damaged site, the DNA wraps around one UvrB monomer. DNA wrap is dependent on ATP binding by UvrB and probably causes local melting of the DNA helix, facilitating insertion of UvrB beta-hairpin between the DNA strands. Then UvrB probes one DNA strand for the presence of a lesion. If a lesion is found the UvrA subunits dissociate and the UvrB-DNA preincision complex is formed. This complex is subsequently bound by UvrC and the second UvrB is released. If no lesion is found, the DNA wraps around the other UvrB subunit that will check the other stand for damage. The chain is UvrABC system protein B from Anaplasma marginale (strain St. Maries).